The following is a 1237-amino-acid chain: Anion exchange protein 2 (1237 aa).

Residues 1-237 form a disordered region; the sequence is MSSAPRRPAS…SYNLQERRRI (237 aa). The Cytoplasmic segment spans residues 1–704; sequence MSSAPRRPAS…DFRDALDPQC (704 aa). Composition is skewed to basic and acidic residues over residues 37–49 and 58–75; these read ELHR…RFEE and GGEE…EYHR. Composition is skewed to basic residues over residues 76 to 85 and 94 to 110; these read QSSHHIHHPL and RRRK…RRRP. S113, S132, S144, S170, and S172 each carry phosphoserine. Residues 120-133 show a composition bias toward acidic residues; it reads TIEEGEEDEDEASE. Residues 137–151 show a composition bias toward low complexity; that stretch reads ARAPTQPSPASTPSS. The span at 205 to 215 shows a compositional bias: gly residues; that stretch reads GTAGGDDGGAS. Residue S239 is modified to Phosphoserine. Residue T253 is modified to Phosphothreonine. An N6-methyllysine modification is found at K270. Positions 286–316 are disordered; sequence RKNAKGSVQSGREGREPGPTPRARPRAPHKP. Residue S439 is modified to Phosphoserine. The tract at residues 445-466 is disordered; it reads SLLGHHHGQGAESDPHVTEPLI. A membrane (anion exchange) region spans residues 704 to 1237; that stretch reads CLAAVIFIYF…DEYNEMPMPV (534 aa). The next 4 membrane-spanning stretches (helical) occupy residues 705–725, 750–770, 792–812, and 822–842; these read LAAV…FGGL, FCLL…LLVF, IGFW…SFLV, and IFAF…LVKI. Residues 843-893 are Extracellular-facing; it reads FQEHPLHGCSVSNSSEADSGDNATWAGTRVTLGLGNGSSAGPAGQGRPRGQ. 3 N-linked (GlcNAc...) asparagine glycosylation sites follow: N855, N864, and N878. The chain crosses the membrane as a helical span at residues 894–914; it reads PNTALLSLVLMAGTFFIAFFL. The Cytoplasmic segment spans residues 915–929; it reads RKFKNGRFFPGRVRR. The next 5 helical transmembrane spans lie at 930-950, 985-1005, 1032-1052, 1086-1106, and 1109-1129; these read VIGD…DYSI, FPVW…ILIF, LLLI…WLAA, RVTG…GDLL, and IPLA…LNGI. The S-palmitoyl cysteine moiety is linked to residue C1169. The chain crosses the membrane as a helical span at residues 1170–1190; the sequence is LALLWAVMSTAASLAFPFILI.

Belongs to the anion exchanger (TC 2.A.31) family.

It is found in the apical cell membrane. Its subcellular location is the basolateral cell membrane. The enzyme catalyses hydrogencarbonate(in) + chloride(out) = hydrogencarbonate(out) + chloride(in). Sodium-independent anion exchanger which mediates the electroneutral exchange of chloride for bicarbonate ions across the cell membrane. Plays an important role in osteoclast differentiation and function. Regulates bone resorption and calpain-dependent actin cytoskeleton organization in osteoclasts via anion exchange-dependent control of pH. Essential for intracellular pH regulation in CD8(+) T-cells upon CD3 stimulation, modulating CD8(+) T-cell response. This is Anion exchange protein 2 (SLC4A2) from Equus caballus (Horse).